Here is a 233-residue protein sequence, read N- to C-terminus: 5'-methylthioadenosine/S-adenosylhomocysteine nucleosidase (233 aa).

Glu12 acts as the Proton acceptor in catalysis. Residues Gly78, Ile152, and 173-174 each bind substrate; that span reads ME. Asp197 serves as the catalytic Proton donor.

The protein belongs to the PNP/UDP phosphorylase family. MtnN subfamily. Homodimer.

The catalysed reaction is S-adenosyl-L-homocysteine + H2O = S-(5-deoxy-D-ribos-5-yl)-L-homocysteine + adenine. It catalyses the reaction S-methyl-5'-thioadenosine + H2O = 5-(methylsulfanyl)-D-ribose + adenine. The enzyme catalyses 5'-deoxyadenosine + H2O = 5-deoxy-D-ribose + adenine. It participates in amino-acid biosynthesis; L-methionine biosynthesis via salvage pathway; S-methyl-5-thio-alpha-D-ribose 1-phosphate from S-methyl-5'-thioadenosine (hydrolase route): step 1/2. Its function is as follows. Catalyzes the irreversible cleavage of the glycosidic bond in both 5'-methylthioadenosine (MTA) and S-adenosylhomocysteine (SAH/AdoHcy) to adenine and the corresponding thioribose, 5'-methylthioribose and S-ribosylhomocysteine, respectively. Also cleaves 5'-deoxyadenosine, a toxic by-product of radical S-adenosylmethionine (SAM) enzymes, into 5-deoxyribose and adenine. Thus, is required for in vivo function of the radical SAM enzymes biotin synthase and lipoic acid synthase, that are inhibited by 5'-deoxyadenosine accumulation. The chain is 5'-methylthioadenosine/S-adenosylhomocysteine nucleosidase from Yersinia pestis bv. Antiqua (strain Antiqua).